Reading from the N-terminus, the 221-residue chain is Glutathione S-transferase (221 aa).

Met-1 is subject to N-acetylmethionine. Ala-2 carries the post-translational modification N-acetylalanine; in Glutathione S-transferase, N-terminally processed. The region spanning 3–82 (GEQNIKYFNI…YIAEKYNLLG (80 aa)) is the GST N-terminal domain. Glutathione contacts are provided by residues Tyr-9, Lys-45, 53 to 54 (QV), and 66 to 67 (QT). A GST C-terminal domain is found at 84-208 (DMKEHAQIIM…PGSKRKPVPD (125 aa)).

It belongs to the GST superfamily. Alpha family. In terms of assembly, homodimer or heterodimer of GSTA1 and GSTA2.

Its subcellular location is the cytoplasm. It catalyses the reaction RX + glutathione = an S-substituted glutathione + a halide anion + H(+). The enzyme catalyses prostaglandin A2 + glutathione = prostaglandin A2-S-(R)-glutathione. The catalysed reaction is prostaglandin J2 + glutathione = prostaglandin J2-S-(R)-glutathione. It carries out the reaction (13S)-hydroperoxy-(9Z,11E)-octadecadienoate + 2 glutathione = (13S)-hydroxy-(9Z,11E)-octadecadienoate + glutathione disulfide + H2O. It catalyses the reaction androst-5-ene-3,17-dione = androst-4-ene-3,17-dione. In terms of biological role, glutathione S-transferase that catalyzes the nucleophilic attack of the sulfur atom of glutathione on the electrophilic groups of a wide range of exogenous and endogenous compounds. Involved in the formation of glutathione conjugates of both prostaglandin A2 (PGA2) and prostaglandin J2 (PGJ2). It also catalyzes the isomerization of D5-androstene-3,17-dione (AD) into D4-androstene-3,17-dione and may therefore play an important role in hormone biosynthesis. Through its glutathione-dependent peroxidase activity toward the fatty acid hydroperoxide (13S)-hydroperoxy-(9Z,11E)-octadecadienoate/13-HPODE it is also involved in the metabolism of oxidized linoleic acid. The chain is Glutathione S-transferase from Antechinus stuartii (Brown marsupial mouse).